Consider the following 705-residue polypeptide: DNA ligase (705 aa).

Residues 42 to 46, 91 to 92, and Glu-125 each bind NAD(+); these read DADFD and SL. Catalysis depends on Lys-127, which acts as the N6-AMP-lysine intermediate. NAD(+)-binding residues include Arg-148, Glu-183, Lys-299, and Lys-323. Residues Cys-428, Cys-431, Cys-446, and Cys-452 each contribute to the Zn(2+) site. The 80-residue stretch at 626–705 folds into the BRCT domain; it reads TDGSPVAGKT…DGWLALIEGL (80 aa).

Belongs to the NAD-dependent DNA ligase family. LigA subfamily. The cofactor is Mg(2+). Mn(2+) serves as cofactor.

It carries out the reaction NAD(+) + (deoxyribonucleotide)n-3'-hydroxyl + 5'-phospho-(deoxyribonucleotide)m = (deoxyribonucleotide)n+m + AMP + beta-nicotinamide D-nucleotide.. In terms of biological role, DNA ligase that catalyzes the formation of phosphodiester linkages between 5'-phosphoryl and 3'-hydroxyl groups in double-stranded DNA using NAD as a coenzyme and as the energy source for the reaction. It is essential for DNA replication and repair of damaged DNA. The chain is DNA ligase from Roseobacter denitrificans (strain ATCC 33942 / OCh 114) (Erythrobacter sp. (strain OCh 114)).